The sequence spans 112 residues: Cytochrome c (112 aa).

C23, C26, and H27 together coordinate heme c. K81 is modified (N6,N6,N6-trimethyllysine). M89 is a binding site for heme c. N6,N6,N6-trimethyllysine is present on K95.

This sequence belongs to the cytochrome c family. Post-translationally, binds 1 heme c group covalently per subunit.

It localises to the mitochondrion intermembrane space. In terms of biological role, electron carrier protein. The oxidized form of the cytochrome c heme group can accept an electron from the heme group of the cytochrome c1 subunit of cytochrome reductase. Cytochrome c then transfers this electron to the cytochrome oxidase complex, the final protein carrier in the mitochondrial electron-transport chain. This chain is Cytochrome c (CC-1), found in Arabidopsis thaliana (Mouse-ear cress).